Consider the following 296-residue polypeptide: Sulfate adenylyltransferase subunit 2 (296 aa).

It belongs to the PAPS reductase family. CysD subfamily. Heterodimer composed of CysD, the smaller subunit, and CysN.

It carries out the reaction sulfate + ATP + H(+) = adenosine 5'-phosphosulfate + diphosphate. It functions in the pathway sulfur metabolism; hydrogen sulfide biosynthesis; sulfite from sulfate: step 1/3. With CysN forms the ATP sulfurylase (ATPS) that catalyzes the adenylation of sulfate producing adenosine 5'-phosphosulfate (APS) and diphosphate, the first enzymatic step in sulfur assimilation pathway. APS synthesis involves the formation of a high-energy phosphoric-sulfuric acid anhydride bond driven by GTP hydrolysis by CysN coupled to ATP hydrolysis by CysD. This chain is Sulfate adenylyltransferase subunit 2, found in Rhodospirillum rubrum (strain ATCC 11170 / ATH 1.1.1 / DSM 467 / LMG 4362 / NCIMB 8255 / S1).